Here is a 427-residue protein sequence, read N- to C-terminus: Serine--tRNA ligase (427 aa).

232–234 lines the L-serine pocket; that stretch reads TAE. An ATP-binding site is contributed by 263–265; sequence RSE. E286 contacts L-serine. 350-353 is an ATP binding site; that stretch reads EISS. Position 385 (S385) interacts with L-serine.

Belongs to the class-II aminoacyl-tRNA synthetase family. Type-1 seryl-tRNA synthetase subfamily. In terms of assembly, homodimer. The tRNA molecule binds across the dimer.

It is found in the cytoplasm. It catalyses the reaction tRNA(Ser) + L-serine + ATP = L-seryl-tRNA(Ser) + AMP + diphosphate + H(+). The catalysed reaction is tRNA(Sec) + L-serine + ATP = L-seryl-tRNA(Sec) + AMP + diphosphate + H(+). The protein operates within aminoacyl-tRNA biosynthesis; selenocysteinyl-tRNA(Sec) biosynthesis; L-seryl-tRNA(Sec) from L-serine and tRNA(Sec): step 1/1. Catalyzes the attachment of serine to tRNA(Ser). Is also able to aminoacylate tRNA(Sec) with serine, to form the misacylated tRNA L-seryl-tRNA(Sec), which will be further converted into selenocysteinyl-tRNA(Sec). The polypeptide is Serine--tRNA ligase (Aromatoleum aromaticum (strain DSM 19018 / LMG 30748 / EbN1) (Azoarcus sp. (strain EbN1))).